Consider the following 259-residue polypeptide: Thiazole synthase (259 aa).

Residue lysine 98 is the Schiff-base intermediate with DXP of the active site. 1-deoxy-D-xylulose 5-phosphate-binding positions include glycine 159, alanine 185–glycine 186, and asparagine 207–serine 208.

It belongs to the ThiG family. As to quaternary structure, homotetramer. Forms heterodimers with either ThiH or ThiS.

It is found in the cytoplasm. It catalyses the reaction [ThiS sulfur-carrier protein]-C-terminal-Gly-aminoethanethioate + 2-iminoacetate + 1-deoxy-D-xylulose 5-phosphate = [ThiS sulfur-carrier protein]-C-terminal Gly-Gly + 2-[(2R,5Z)-2-carboxy-4-methylthiazol-5(2H)-ylidene]ethyl phosphate + 2 H2O + H(+). It participates in cofactor biosynthesis; thiamine diphosphate biosynthesis. Functionally, catalyzes the rearrangement of 1-deoxy-D-xylulose 5-phosphate (DXP) to produce the thiazole phosphate moiety of thiamine. Sulfur is provided by the thiocarboxylate moiety of the carrier protein ThiS. In vitro, sulfur can be provided by H(2)S. The polypeptide is Thiazole synthase (Chlorobium phaeobacteroides (strain DSM 266 / SMG 266 / 2430)).